A 139-amino-acid polypeptide reads, in one-letter code: Transcriptional regulator WhiB5 (139 aa).

In terms of domain architecture, 4Fe-4S Wbl-type spans 4-77 (PCATDPELWF…AGIKLPGGQY (74 aa)). Residues cysteine 5, cysteine 41, cysteine 45, and cysteine 53 each coordinate [4Fe-4S] cluster.

This sequence belongs to the WhiB family. [4Fe-4S] cluster serves as cofactor. Post-translationally, the Fe-S cluster can be nitrosylated by nitric oxide (NO). In terms of processing, upon Fe-S cluster removal intramolecular disulfide bonds are formed.

The protein resides in the cytoplasm. Functionally, a transcription factor that is probably redox-responsive. Probably plays a role in immunomodulation and reactivation after chronic infection. Its induction results in transcription of a number of genes including sigM, and the genes for 2 type VII secretion systems ESX-2 and ESX-4. Seems to negatively regulate its own expression. The apo-form has been shown to act as a protein disulfide reductase. The apo- but not holo-form probably binds DNA. This chain is Transcriptional regulator WhiB5 (whiB5), found in Mycobacterium tuberculosis (strain ATCC 25618 / H37Rv).